Here is a 267-residue protein sequence, read N- to C-terminus: MEWDKAKASSGEAVDDRGGGEGGLGYVKVMTDEQMEVLRKQISIYATICEQLVEMHRALTAQQDSIAGMRLGNLYCDPLMVPGGHKITARQRWTPTPMQLQILENIFDQGNGTPSKQKIKDITAELSQHGQISETNVYNWFQNRRARSKRKQAALPNNNAESEAEADEESPTDKKPKSDRPLHQNIAMRDHNSERISEMHHFDTEHEQIRRMMYASNDSSSRSSGSLGQMSFYDNVMSNPRIDHFLGKVESPGSFPHMRSGESFDMY.

Residues 88 to 152 constitute a DNA-binding region (homeobox; WUS-type); sequence TARQRWTPTP…NRRARSKRKQ (65 aa). A disordered region spans residues 148 to 195; it reads SKRKQAALPNNNAESEAEADEESPTDKKPKSDRPLHQNIAMRDHNSER. Residues 171 to 195 are compositionally biased toward basic and acidic residues; it reads PTDKKPKSDRPLHQNIAMRDHNSER.

The protein belongs to the WUS homeobox family.

The protein localises to the nucleus. Transcription factor which may be involved in developmental processes. The polypeptide is WUSCHEL-related homeobox 8 (WOX8) (Oryza sativa subsp. japonica (Rice)).